A 257-amino-acid polypeptide reads, in one-letter code: Alkaline phosphatase synthesis transcriptional regulatory protein SphR (257 aa).

In terms of domain architecture, Response regulatory spans 25 to 148 (RILVVEDEAV…ELVARCRALL (124 aa)). Asp-83 bears the 4-aspartylphosphate mark. Positions 159–257 (PAVLRYEGLK…TVRGFGYRLG (99 aa)) form a DNA-binding region, ompR/PhoB-type.

Phosphorylated by SphS.

Its function is as follows. Member of the two-component regulatory system SphR/SphS. Response regulator. Involved in inducible production of alkaline phosphatase in response to phosphate limitation as it is directly involved in the regulation of phoA transcription in response to phosphate limitation. Binds to two distinct sites upstream from the phoA promoter. The sequence is that of Alkaline phosphatase synthesis transcriptional regulatory protein SphR (sphR) from Synechococcus elongatus (strain ATCC 33912 / PCC 7942 / FACHB-805) (Anacystis nidulans R2).